Here is a 159-residue protein sequence, read N- to C-terminus: uncharacterized protein (159 aa).

The N-acetyltransferase domain maps to 4–153 (IKTDDLTHPA…HSRFLSLTLC (150 aa)).

It belongs to the acetyltransferase family.

This is an uncharacterized protein from Escherichia coli (strain K12).